Consider the following 435-residue polypeptide: uncharacterized protein (435 aa).

The next 12 membrane-spanning stretches (helical) occupy residues 26–46 (LLSG…VAAP), 61–81 (IVFS…GSLL), 96–116 (IWSF…LYLF), 119–139 (LIGL…ALWF), 150–170 (LFDS…AFLV), 177–197 (VAFL…WQYY), 242–262 (VWGL…LLTW), 281–301 (FTAV…GWLV), 325–345 (FGFF…IICI), 347–367 (IGLA…AELA), 385–405 (LFGG…TGSF), and 407–427 (LSFL…VFVL).

This sequence belongs to the major facilitator superfamily. Phthalate permease family.

The protein localises to the cell membrane. This is an uncharacterized protein from Bacillus subtilis (strain 168).